A 530-amino-acid chain; its full sequence is Na(+)/H(+) antiporter NhaB (530 aa).

Helical transmembrane passes span 13 to 33 (FLGK…IINP), 98 to 118 (LLLV…LFIF), 123 to 145 (LGIQ…LSAF), 149 to 166 (LTVI…YSIY), 205 to 225 (LLMH…VGEP), 238 to 258 (FGEF…CGIL), 308 to 328 (IAVW…LIGL), 330 to 350 (VIIL…GKAF), 356 to 376 (FTAL…QALF), 393 to 413 (LALF…VFVG), 451 to 471 (ATPN…APLI), and 480 to 500 (IMAL…IVFF).

This sequence belongs to the NhaB Na(+)/H(+) (TC 2.A.34) antiporter family.

Its subcellular location is the cell inner membrane. The enzyme catalyses 2 Na(+)(in) + 3 H(+)(out) = 2 Na(+)(out) + 3 H(+)(in). Na(+)/H(+) antiporter that extrudes sodium in exchange for external protons. This is Na(+)/H(+) antiporter NhaB from Vibrio atlanticus (strain LGP32) (Vibrio splendidus (strain Mel32)).